The primary structure comprises 384 residues: GTPase Obg (384 aa).

The Obg domain occupies 1–159 (MKFIDEAKIE…RSLQLELKVL (159 aa)). The interval 20 to 46 (ATSFRREKFVPRGGPDGGDGGKGGSVW) is disordered. Positions 33 to 43 (GPDGGDGGKGG) are enriched in gly residues. The 189-residue stretch at 160 to 348 (ADVGLLGMPN…LVHQINQYLT (189 aa)) folds into the OBG-type G domain. GTP-binding positions include 166-173 (GMPNAGKS), 191-195 (FTTLH), 213-216 (DIPG), 284-287 (NKLD), and 329-331 (SAL). Mg(2+) contacts are provided by Ser-173 and Thr-193.

This sequence belongs to the TRAFAC class OBG-HflX-like GTPase superfamily. OBG GTPase family. In terms of assembly, monomer. Mg(2+) is required as a cofactor.

Its subcellular location is the cytoplasm. Its function is as follows. An essential GTPase which binds GTP, GDP and possibly (p)ppGpp with moderate affinity, with high nucleotide exchange rates and a fairly low GTP hydrolysis rate. Plays a role in control of the cell cycle, stress response, ribosome biogenesis and in those bacteria that undergo differentiation, in morphogenesis control. The protein is GTPase Obg of Neisseria meningitidis serogroup C / serotype 2a (strain ATCC 700532 / DSM 15464 / FAM18).